Reading from the N-terminus, the 346-residue chain is Uroporphyrinogen decarboxylase (346 aa).

Substrate is bound by residues 21–25 (RQAGR), F40, D71, Y146, S201, and H316.

Belongs to the uroporphyrinogen decarboxylase family. Homodimer.

Its subcellular location is the cytoplasm. The catalysed reaction is uroporphyrinogen III + 4 H(+) = coproporphyrinogen III + 4 CO2. The protein operates within porphyrin-containing compound metabolism; protoporphyrin-IX biosynthesis; coproporphyrinogen-III from 5-aminolevulinate: step 4/4. Its function is as follows. Catalyzes the decarboxylation of four acetate groups of uroporphyrinogen-III to yield coproporphyrinogen-III. In Rickettsia conorii (strain ATCC VR-613 / Malish 7), this protein is Uroporphyrinogen decarboxylase.